We begin with the raw amino-acid sequence, 232 residues long: Ribonuclease 3 (232 aa).

The 130-residue stretch at 5 to 134 (QTVLKNHFEI…FLGALLLDKD (130 aa)) folds into the RNase III domain. Residue glutamate 47 coordinates Mg(2+). Aspartate 51 is an active-site residue. Positions 120 and 123 each coordinate Mg(2+). The active site involves glutamate 123. The DRBM domain maps to 160–229 (DYKTHLQELL…AKNAVEKGLD (70 aa)).

This sequence belongs to the ribonuclease III family. In terms of assembly, homodimer. The cofactor is Mg(2+).

It is found in the cytoplasm. It catalyses the reaction Endonucleolytic cleavage to 5'-phosphomonoester.. Functionally, digests double-stranded RNA. Involved in the processing of primary rRNA transcript to yield the immediate precursors to the large and small rRNAs (23S and 16S). Processes some mRNAs, and tRNAs when they are encoded in the rRNA operon. Processes pre-crRNA and tracrRNA of type II CRISPR loci if present in the organism. The chain is Ribonuclease 3 from Streptococcus pneumoniae (strain ATCC BAA-255 / R6).